A 325-amino-acid polypeptide reads, in one-letter code: UDP-N-acetylglucosamine transporter (325 aa).

8 helical membrane passes run 8 to 24 (VSLGILVFQTTSLVLTM), 42 to 58 (AVVVAELLKIMACILLV), 138 to 154 (VYQWLSLVILMTGVAFV), 173 to 189 (FVGLMAVLTACFSSGFA), 209 to 225 (IQLGFFGSIFGLMGVYI), 246 to 262 (IVVVLQALGGLVIAAVI), 268 to 284 (ILKGFATSLSIILSTLI), and 295 to 311 (TSVFFLGAILVITATFL).

Belongs to the nucleotide-sugar transporter family. SLC35A subfamily. In terms of assembly, interacts with SLC35A2; the interaction is reduced in the presence of SLC35A4. Found in a complex with SLC35A2 and SLC35A4. Interacts with MGAT4B. Post-translationally, O-Glcnacylation regulates the stability of SLC35A3 and the specific complex formation with MGAT4B.

It is found in the golgi apparatus membrane. It catalyses the reaction UMP(out) + UDP-N-acetyl-alpha-D-glucosamine(in) = UMP(in) + UDP-N-acetyl-alpha-D-glucosamine(out). Its function is as follows. Transports diphosphate-N-acetylglucosamine (UDP-GlcNAc) from the cytosol into the lumen of the Golgi apparatus, functioning as an antiporter that exchanges UDP-N-acetyl-alpha-D-glucosamine for UMP. May supply UDP-GlcNAc as substrate for Golgi-resident glycosyltransferases that generate highly branched, multiantennary complex N-glycans and keratan sulfate. However, the exact role of SLC35A3 still needs to be elucidated, it could be a member of a catalytically more efficient multiprotein complex rather than function independently as a single transporter. The sequence is that of UDP-N-acetylglucosamine transporter (SLC35A3) from Homo sapiens (Human).